Here is a 114-residue protein sequence, read N- to C-terminus: MDKMLEISEEAITRYFTTLSQFGYKKYSDVDKIIVLFFMEEMLAGEMSYYVTQDDYRNIVNALYCLAGSTCMIDFPMFESYDTLVHSNNRTFVPRITEDSILRSTEDDNFRVEA.

Heterotrimer with THA. The heterotrimers further assemble as 12 docking hubs that anchor the trimeric tail fibers.

It localises to the virion. Functionally, forms the tail hub together with tail hub protein A (THA). The polypeptide is Tail hub protein B (Bacteroides intestinalis (Bacteroides phage PhiCrAss001)).